A 602-amino-acid chain; its full sequence is uncharacterized protein (602 aa).

The MCM domain occupies 271–472 (IIDILADILI…RDEEVAKYIF (202 aa)). ATP is bound at residue 315–322 (TEVGIDKT).

This sequence belongs to the MCM family.

This is an uncharacterized protein from Methanocaldococcus jannaschii (strain ATCC 43067 / DSM 2661 / JAL-1 / JCM 10045 / NBRC 100440) (Methanococcus jannaschii).